Here is a 241-residue protein sequence, read N- to C-terminus: Ribonuclease PH (241 aa).

Phosphate is bound by residues Arg-89 and 127–129; that span reads GTR.

This sequence belongs to the RNase PH family. As to quaternary structure, homohexameric ring arranged as a trimer of dimers.

It carries out the reaction tRNA(n+1) + phosphate = tRNA(n) + a ribonucleoside 5'-diphosphate. In terms of biological role, phosphorolytic 3'-5' exoribonuclease that plays an important role in tRNA 3'-end maturation. Removes nucleotide residues following the 3'-CCA terminus of tRNAs; can also add nucleotides to the ends of RNA molecules by using nucleoside diphosphates as substrates, but this may not be physiologically important. Probably plays a role in initiation of 16S rRNA degradation (leading to ribosome degradation) during starvation. In Xanthomonas oryzae pv. oryzae (strain MAFF 311018), this protein is Ribonuclease PH.